A 505-amino-acid polypeptide reads, in one-letter code: Cytochrome P450 9b2 (505 aa).

Position 449 (C449) interacts with heme.

It belongs to the cytochrome P450 family. Heme is required as a cofactor.

It localises to the endoplasmic reticulum membrane. It is found in the microsome membrane. In terms of biological role, may be involved in the metabolism of insect hormones and in the breakdown of synthetic insecticides. The protein is Cytochrome P450 9b2 (Cyp9b2) of Drosophila melanogaster (Fruit fly).